Consider the following 900-residue polypeptide: Nonribosomal peptide synthetase AMT10 (900 aa).

Positions 284 to 686 (KQAQQNPAAM…ARRNGYIKLR (403 aa)) are adenylation. One can recognise a Carrier domain in the interval 824–900 (ELQSDMERYL…QMARNCSLLD (77 aa)). S861 bears the O-(pantetheine 4'-phosphoryl)serine mark.

It belongs to the NRP synthetase family.

It functions in the pathway mycotoxin biosynthesis. Its function is as follows. Nonribosomal peptide synthetase; part of the gene clusters that mediate the biosynthesis of AM-toxins, host-selective toxins (HSTs) causing Alternaria blotch on apple, a worldwide distributed disease. AM-toxins are cyclic depsipeptides containing the 3 residues 2-hydroxy-isovaleric acid (2-HIV), dehydroalanine, L-alanine which are common for all 3 AM-toxins I to III. The fourth precursor is L-alpha-amino-methoxyphenyl-valeric acid (L-Amv) for AM-toxin I, L-alpha-amino-phenyl-valeric acid (L-Apv) for AM-toxin II, and L-alpha-amino-hydroxyphenyl-valeric acid (L-Ahv) for AM-toxin III. AM-toxins have two target sites for affecting susceptible apple cells; they cause invagination of the plasma membrane and electrolyte loss and chloroplast disorganization. The non-ribosomal peptide synthetase AMT1 contains 4 catalytic modules and is responsible for activation of each residue in AM-toxin. The aldo-keto reductase AMT2 catalyzes the conversion of 2-keto-isovaleric acid (2-KIV) to 2-hydroxy-isovaleric acid (2-HIV), one of the precursor residues incorporated by AMT1 during AM-toxin biosynthesis, by reduction of its ketone to an alcohol. The cytochrome P450 monooxygenase AMT3 and the thioesterase AMT4 are also important for AM-toxin production, but their exact function within the AM-toxin biosynthesis are not known yet. Up to 21 proteins (including AMT1 to AMT4) are predicted to be involved in AM-toxin biosynthesis since their expression ishighly up-regulated in AM-toxin-producing cultures. The chain is Nonribosomal peptide synthetase AMT10 from Alternaria alternata (Alternaria rot fungus).